The primary structure comprises 486 residues: Ammonium transporter 2 member 1 (486 aa).

A run of 11 helical transmembrane segments spans residues 29 to 49 (ASTL…GSIV), 57 to 77 (SAFM…LVGF), 127 to 147 (LVLF…GSVL), 161 to 181 (LWLL…GFLY), 190 to 210 (GGYV…YWVG), 225 to 245 (ILLM…FNGG), 252 to 272 (IAAS…LLMW), 285 to 305 (VIGA…GAGL), 309 to 329 (WAAV…MMIL), 343 to 363 (LAVF…TGLL), and 399 to 419 (FVIA…GLFI). Over residues 454-470 (RHDLSRGGGGGDRDGPA) the composition is skewed to basic and acidic residues. Residues 454–473 (RHDLSRGGGGGDRDGPAGER) form a disordered region.

This sequence belongs to the ammonia transporter channel (TC 1.A.11.2) family. In terms of tissue distribution, expressed in roots and leaf blades and sheaths.

The protein resides in the cell membrane. Functionally, involved in ammonium transport. The chain is Ammonium transporter 2 member 1 (AMT2-1) from Oryza sativa subsp. japonica (Rice).